The sequence spans 510 residues: Amidophosphoribosyltransferase (510 aa).

Catalysis depends on Cys2, which acts as the Nucleophile. Residues 2 to 239 form the Glutamine amidotransferase type-2 domain; the sequence is CGILGIALAD…PGEAVIIPKD (238 aa). Asp373 and Asp374 together coordinate Mg(2+).

This sequence in the C-terminal section; belongs to the purine/pyrimidine phosphoribosyltransferase family. Mg(2+) is required as a cofactor.

The catalysed reaction is 5-phospho-beta-D-ribosylamine + L-glutamate + diphosphate = 5-phospho-alpha-D-ribose 1-diphosphate + L-glutamine + H2O. The protein operates within purine metabolism; IMP biosynthesis via de novo pathway; N(1)-(5-phospho-D-ribosyl)glycinamide from 5-phospho-alpha-D-ribose 1-diphosphate: step 1/2. The chain is Amidophosphoribosyltransferase (ADE4) from Lachancea kluyveri (Yeast).